The primary structure comprises 254 residues: Mitochondrial cardiolipin hydrolase (254 aa).

Topologically, residues 1-9 (MERFRWQVA) are mitochondrial intermembrane. A required for mitochondrial localization region spans residues 1–43 (MERFRWQVAAVAAVGLALALEALPSVLCWLRAGRRQQQRPPRR). A helical membrane pass occupies residues 10-32 (AVAAVGLALALEALPSVLCWLRA). Topologically, residues 33-254 (GRRQQQRPPR…SKCSHHLSQV (222 aa)) are cytoplasmic. The segment at 49–82 (PSQVTCTEALLQAPGEAPSGPPAGCRCSLPHGES) adopts a C3H1-type; atypical zinc-finger fold. One can recognise a PLD phosphodiesterase domain in the interval 155–182 (DLGYMHHKFAIVDKKVLITGSLNWTTQA). Catalysis depends on residues histidine 160, lysine 162, and aspartate 167.

This sequence belongs to the phospholipase D family. MitoPLD/Zucchini subfamily. In terms of assembly, homodimer. Interacts with MOV10L1. Interacts with MIGA1 and MIGA2; possibly facilitating homodimer formation. Interacts with GK2.

The protein localises to the mitochondrion outer membrane. The protein resides in the nucleus membrane. Its subcellular location is the cell membrane. It is found in the golgi apparatus. The enzyme catalyses a cardiolipin + H2O = a 1,2-diacyl-sn-glycero-3-phospho-(1'-sn-glycerol) + a 1,2-diacyl-sn-glycero-3-phosphate + H(+). With respect to regulation, single stranded DNA (ssDNA) hydrolase activity does not depend upon, but is stimulated by the presence of Ca(2+) and Mn(2+). MIGA1 and MIGA2 increase PLD6 self-association affinity and affects the homodimer conformation facilitating its phospholipase activity over the nuclease activity. MYC induces its expression and stimulates its phospholipase activity. Functionally, presents phospholipase and nuclease activities, depending on the different physiological conditions. Interaction with Mitoguardin (MIGA1 or MIGA2) affects the dimer conformation, facilitating the lipase activity over the nuclease activity. Plays a key role in mitochondrial fusion and fission via its phospholipase activity. In its phospholipase role, it uses the mitochondrial lipid cardiolipin as substrate to generate phosphatidate (PA or 1,2-diacyl-sn-glycero-3-phosphate), a second messenger signaling lipid. Production of PA facilitates Mitofusin-mediated fusion, whereas the cleavage of PA by the Lipin family of phosphatases produces diacylgycerol (DAG) which promotes mitochondrial fission. Both Lipin and DAG regulate mitochondrial dynamics and membrane fusion/fission, important processes for adapting mitochondrial metabolism to changes in cell physiology. Mitochondrial fusion enables cells to cope with the increased nucleotide demand during DNA synthesis. Mitochondrial function and dynamics are closely associated with biological processes such as cell growth, proliferation, and differentiation. Mediator of MYC activity, promotes mitochondrial fusion and activates AMPK which in turn inhibits YAP/TAZ, thereby inducing cell growth and proliferation. The endonuclease activity plays a critical role in PIWI-interacting RNA (piRNA) biogenesis during spermatogenesis. Implicated in spermatogenesis and sperm fertility in testicular germ cells, its single strand-specific nuclease activity is critical for the biogenesis/maturation of PIWI-interacting RNA (piRNA). MOV10L1 selectively binds to piRNA precursors and funnels them to the endonuclease that catalyzes the first cleavage step of piRNA processing to generate piRNA intermediate fragments that are subsequently loaded to Piwi proteins. Cleaves either DNA or RNA substrates with similar affinity, producing a 5' phosphate end, in this way it participates in the processing of primary piRNA transcripts. piRNAs provide essential protection against the activity of mobile genetic elements. piRNA-mediated transposon silencing is thus critical for maintaining genome stability, in particular in germline cells when transposons are mobilized as a consequence of wide-spread genomic demethylation. PA may act as signaling molecule in the recognition/transport of the precursor RNAs of primary piRNAs. Interacts with tesmin in testes, suggesting a role in spermatogenesis via association with its interacting partner. The polypeptide is Mitochondrial cardiolipin hydrolase (PLD6) (Canis lupus familiaris (Dog)).